The following is a 387-amino-acid chain: Succinate--CoA ligase [ADP-forming] subunit beta (387 aa).

The region spanning 9-244 is the ATP-grasp domain; that stretch reads KQLFAEYGIP…KTQEDETEVL (236 aa). Residues lysine 46, 53-55, glycine 102, and glutamate 107 each bind ATP; that span reads GRG. Mg(2+) is bound by residues asparagine 199 and aspartate 213. Substrate is bound by residues asparagine 264 and 321-323; that span reads GIV.

This sequence belongs to the succinate/malate CoA ligase beta subunit family. Heterotetramer of two alpha and two beta subunits. The cofactor is Mg(2+).

It catalyses the reaction succinate + ATP + CoA = succinyl-CoA + ADP + phosphate. It carries out the reaction GTP + succinate + CoA = succinyl-CoA + GDP + phosphate. It functions in the pathway carbohydrate metabolism; tricarboxylic acid cycle; succinate from succinyl-CoA (ligase route): step 1/1. In terms of biological role, succinyl-CoA synthetase functions in the citric acid cycle (TCA), coupling the hydrolysis of succinyl-CoA to the synthesis of either ATP or GTP and thus represents the only step of substrate-level phosphorylation in the TCA. The beta subunit provides nucleotide specificity of the enzyme and binds the substrate succinate, while the binding sites for coenzyme A and phosphate are found in the alpha subunit. The sequence is that of Succinate--CoA ligase [ADP-forming] subunit beta from Xylella fastidiosa (strain 9a5c).